Here is a 1424-residue protein sequence, read N- to C-terminus: S-layer protein A (1424 aa).

An N-terminal signal peptide occupies residues 1–24; it reads MNKLVGLLVSSLFLASILIGIAPA. N-linked (GlcNAc...) asparagine glycosylation is found at N60, N70, N276, N295, N342, N358, N377, N468, N517, N545, N559, N581, N633, N714, N875, N914, N955, N989, N1018, N1042, N1093, N1134, N1197, N1217, N1252, N1276, N1304, and N1419.

This sequence belongs to the Sulfolobales SlaA family. The mushroom-shaped unit cells of the Sulfolobales' S-layers may consist of three SlaB subunits and six SlaA subunits. In terms of processing, glycosylated. C-terminal glycosylation sites are modified with a heterogeneous family of glycans, with the largest having a composition Glc(1)Man(2)GlcNAc(2) plus 6-sulfoquinovose (QuiS).

The protein resides in the secreted. It localises to the cell wall. The protein localises to the S-layer. Functionally, S-layer large protein. May form the highly ordered outer sheath. This chain is S-layer protein A, found in Sulfolobus acidocaldarius (strain ATCC 33909 / DSM 639 / JCM 8929 / NBRC 15157 / NCIMB 11770).